Here is a 388-residue protein sequence, read N- to C-terminus: Subtilisin-like serine protease AsES (388 aa).

Positions methionine 1–glycine 15 are cleaved as a signal peptide. The propeptide at alanine 16–alanine 105 is removed in mature form. Residues proline 114–glycine 388 form the Peptidase S8 domain. A disulfide bridge links cysteine 141 with cysteine 230. Active-site charge relay system residues include aspartate 146 and histidine 176. Asparagine 232 and asparagine 237 each carry an N-linked (GlcNAc...) asparagine glycan. A disulfide bond links cysteine 285 and cysteine 357. The Charge relay system role is filled by serine 331.

It belongs to the peptidase S8 family.

Its subcellular location is the secreted. The elicitor proteolytic activity is completely inhibited by PMSF. The activity is also significantly reduced by aprotinin (leading to 37% residual activity), by leupeptin (leading to 54% residual activity), by the ovomucoid trypsin inhibitor (leading to 65% residual activity), and by p-aminobenzamidine (leading to 26% residual activity). Extracellular elicitor protein that induces a strong defense response in strawberry and confers both local and systemic plant resistance against the fungal pathogen Colletotricum acutatum, the casual agent of anthracnose disease. AsES activates a cascade of defense responses, including calcium influx, oxidative burst, hypersensitive cell-death response (HR), accumulation of autofluorescent compounds, cell-wall reinforcement with callose and lignin deposition, salicylic acid accumulation, and expression of defense-related genes, such as PR1, PG1, MYB30, RBOH-D, RBOH-F, CHI23, and FLS. The oxidative burst consists in a progressive extracellular accumulation of H(2)O(2) that starts immediately after the contact with AsES and is preceded by a rapid and transient cell membrane depolarization. During this phase takes place also a rapid intracellular accumulation of NO at the chloroplasts. After the first extracellular H(2)O(2) production phase, two intracellular H(2)O(2) accumulation events occur, the first 2 hours after induction, and the second 7 hours after induction. AsES also produces a transient increase of ion leakage, and a progressive alkalinization of the extracellular medium. Confers also local and systemic plant resistance against Botrytis cinerea in Arabidopsis thaliana. Systemic, but not local resistance is dependent on the length of exposure to AsES. The protection to B.cinerea is due to the induction of the plant defenses via the salicylic acid, jasmonic acid and ethylene signaling pathways. Exhibits subtilisin-like proteolytic activity which is necessary but not sufficient for its elicitor function in strawberry plants. Probably induces defense by means of proteolysis of one or multiple host proteins that are specific targets of this protease. This Sarocladium strictum (Black bundle disease fungus) protein is Subtilisin-like serine protease AsES.